The following is a 404-amino-acid chain: Acetylornithine aminotransferase (404 aa).

Pyridoxal 5'-phosphate is bound by residues 113–114 and Phe-139; that span reads GT. Arg-142 contacts N(2)-acetyl-L-ornithine. 224–227 is a binding site for pyridoxal 5'-phosphate; the sequence is DEVQ. Lys-253 carries the N6-(pyridoxal phosphate)lysine modification. N(2)-acetyl-L-ornithine is bound at residue Ser-281. Thr-282 lines the pyridoxal 5'-phosphate pocket.

It belongs to the class-III pyridoxal-phosphate-dependent aminotransferase family. ArgD subfamily. As to quaternary structure, homodimer. Pyridoxal 5'-phosphate is required as a cofactor.

The protein localises to the cytoplasm. The enzyme catalyses N(2)-acetyl-L-ornithine + 2-oxoglutarate = N-acetyl-L-glutamate 5-semialdehyde + L-glutamate. The protein operates within amino-acid biosynthesis; L-arginine biosynthesis; N(2)-acetyl-L-ornithine from L-glutamate: step 4/4. The chain is Acetylornithine aminotransferase from Mycobacterium leprae (strain TN).